Here is a 144-residue protein sequence, read N- to C-terminus: 3-hydroxyacyl-[acyl-carrier-protein] dehydratase FabZ (144 aa).

The active site involves H51.

This sequence belongs to the thioester dehydratase family. FabZ subfamily.

The protein resides in the cytoplasm. The catalysed reaction is a (3R)-hydroxyacyl-[ACP] = a (2E)-enoyl-[ACP] + H2O. In terms of biological role, involved in unsaturated fatty acids biosynthesis. Catalyzes the dehydration of short chain beta-hydroxyacyl-ACPs and long chain saturated and unsaturated beta-hydroxyacyl-ACPs. This Clostridium botulinum (strain Loch Maree / Type A3) protein is 3-hydroxyacyl-[acyl-carrier-protein] dehydratase FabZ.